Reading from the N-terminus, the 108-residue chain is UPF0102 protein Sden_0272 (108 aa).

The protein belongs to the UPF0102 family.

The protein is UPF0102 protein Sden_0272 of Shewanella denitrificans (strain OS217 / ATCC BAA-1090 / DSM 15013).